Consider the following 214-residue polypeptide: Orotate phosphoribosyltransferase (214 aa).

Position 26 (lysine 26) interacts with 5-phospho-alpha-D-ribose 1-diphosphate. 34-35 is a binding site for orotate; that stretch reads FF. 5-phospho-alpha-D-ribose 1-diphosphate contacts are provided by residues 72-73, arginine 99, lysine 100, lysine 103, histidine 105, and 124-132; these read YK and DDVITAGTA. Orotate-binding residues include threonine 128 and arginine 157.

This sequence belongs to the purine/pyrimidine phosphoribosyltransferase family. PyrE subfamily. As to quaternary structure, homodimer. Mg(2+) serves as cofactor.

It carries out the reaction orotidine 5'-phosphate + diphosphate = orotate + 5-phospho-alpha-D-ribose 1-diphosphate. It functions in the pathway pyrimidine metabolism; UMP biosynthesis via de novo pathway; UMP from orotate: step 1/2. Catalyzes the transfer of a ribosyl phosphate group from 5-phosphoribose 1-diphosphate to orotate, leading to the formation of orotidine monophosphate (OMP). In Pseudomonas fluorescens (strain Pf0-1), this protein is Orotate phosphoribosyltransferase.